A 160-amino-acid chain; its full sequence is Regulatory protein RecX (160 aa).

Belongs to the RecX family.

It is found in the cytoplasm. Its function is as follows. Modulates RecA activity. In Xanthomonas oryzae pv. oryzae (strain MAFF 311018), this protein is Regulatory protein RecX.